A 533-amino-acid polypeptide reads, in one-letter code: Probable ribonuclease ZC3H12D (533 aa).

Residues 92–246 (LRPIVIDGSN…PLGRRGPTLS (155 aa)) enclose the RNase NYN domain. The C3H1-type zinc-finger motif lies at 251–282 (KKPRPPEPSWQHCPYGKKCTYGVKCRFYHPER). Positions 262-368 (HCPYGKKCTY…ASGVVSQSRG (107 aa)) are necessary for interaction with ZC3H12A. Residues 302 to 335 (LGGGAEEPRTPSARSRPTTARLLPQEPGEHDLPP) are disordered.

Belongs to the ZC3H12 family. Interacts with ZC3H12A. Mg(2+) serves as cofactor. In terms of tissue distribution, expressed at low levels in bone marrow derived macrophages.

The protein localises to the cytoplasm. Its subcellular location is the P-body. Its function is as follows. May regulate cell growth likely by suppressing RB1 phosphorylation. May function as RNase and regulate the levels of target RNA species (Potential). In association with ZC3H12A enhances the degradation of interleukin IL-6 mRNA level in activated macrophages. Serve as a tumor suppressor in certain leukemia cells. Overexpression inhibits the G1 to S phase progression through suppression of RB1 phosphorylation. The chain is Probable ribonuclease ZC3H12D from Mus musculus (Mouse).